Here is a 675-residue protein sequence, read N- to C-terminus: Putative methyl-accepting chemotaxis AlkN (675 aa).

The next 2 membrane-spanning stretches (helical) occupy residues 24–44 (IALYVGLAIFIVLALANFLLS) and 303–323 (FPSVWLGGVSAGLAVLFFFII). One can recognise an HAMP domain in the interval 343 to 394 (QRNQAAILRLLDELGDLADGDLTVQATVTEDFTGAIADSINYSIDQLRNLVQ). Residues 399–635 (SAVQVASAAQ…HISNTMNVIQ (237 aa)) enclose the Methyl-accepting transducer domain.

The protein belongs to the methyl-accepting chemotaxis (MCP) protein family.

It localises to the membrane. It functions in the pathway hydrocarbon metabolism; alkane degradation. In terms of biological role, chemotactic-signal transducers respond to changes in the concentration of attractants and repellents in the environment, transduce a signal from the outside to the inside of the cell, and facilitate sensory adaptation through the variation of the level of methylation. The polypeptide is Putative methyl-accepting chemotaxis AlkN (Alcanivorax borkumensis (strain ATCC 700651 / DSM 11573 / NCIMB 13689 / SK2)).